The following is a 504-amino-acid chain: Aspartyl/glutamyl-tRNA(Asn/Gln) amidotransferase subunit B (504 aa).

Belongs to the GatB/GatE family. GatB subfamily. In terms of assembly, heterotrimer of A, B and C subunits.

It carries out the reaction L-glutamyl-tRNA(Gln) + L-glutamine + ATP + H2O = L-glutaminyl-tRNA(Gln) + L-glutamate + ADP + phosphate + H(+). The catalysed reaction is L-aspartyl-tRNA(Asn) + L-glutamine + ATP + H2O = L-asparaginyl-tRNA(Asn) + L-glutamate + ADP + phosphate + 2 H(+). In terms of biological role, allows the formation of correctly charged Asn-tRNA(Asn) or Gln-tRNA(Gln) through the transamidation of misacylated Asp-tRNA(Asn) or Glu-tRNA(Gln) in organisms which lack either or both of asparaginyl-tRNA or glutaminyl-tRNA synthetases. The reaction takes place in the presence of glutamine and ATP through an activated phospho-Asp-tRNA(Asn) or phospho-Glu-tRNA(Gln). In Tropheryma whipplei (strain Twist) (Whipple's bacillus), this protein is Aspartyl/glutamyl-tRNA(Asn/Gln) amidotransferase subunit B.